An 878-amino-acid chain; its full sequence is Vacuolar membrane protease (878 aa).

Topologically, residues 1 to 16 (MASLRLPRANPLAFTR) are cytoplasmic. The chain crosses the membrane as a helical span at residues 17–37 (WPVTVITAIVYLALLIPLLVV). The Vacuolar segment spans residues 38 to 390 (HHVVPSAPSS…STFVLFQLHT (353 aa)). Asn53 and Asn119 each carry an N-linked (GlcNAc...) asparagine glycan. Zn(2+)-binding residues include His174 and Asp186. The active-site Proton acceptor is Glu220. Residues Glu221, Glu246, and His319 each coordinate Zn(2+). The chain crosses the membrane as a helical span at residues 391-411 (LFALLVTLLIVGPLTLLFTSI). Residues 412-442 (ALTKADKMYLFRSSAKSEDRLDVVPLQGLRG) lie on the Cytoplasmic side of the membrane. The chain crosses the membrane as a helical span at residues 443-463 (FFRFPFLFGIPTVVTVGLAYL). Residues 464-473 (VTKVNPYIIH) lie on the Vacuolar side of the membrane. The helical transmembrane segment at 474-494 (SSAYAVWSMMVAAWVFLAWFV) threads the bilayer. Residues 495–508 (SRVADFARPSAFHR) lie on the Cytoplasmic side of the membrane. A helical membrane pass occupies residues 509–529 (IYTLTWMYVLSWVSAVIATVY). The Vacuolar segment spans residues 530 to 533 (ANQR). A helical membrane pass occupies residues 534–554 (GLAGGYFIFFFHAGIFLATWI). Residues 555–659 (SYLELFALPS…ALPKWTWGLQ (105 aa)) lie on the Cytoplasmic side of the membrane. Low complexity predominate over residues 577–590 (GRASGHGSRRGTTS). A disordered region spans residues 577–611 (GRASGHGSRRGTTSGEDDGEEAEEEPTESTSLLGS). A compositionally biased stretch (acidic residues) spans 591 to 603 (GEDDGEEAEEEPT). The helical transmembrane segment at 660 to 680 (LLLTAPITLIMVGPLALLTIS) threads the bilayer. The Vacuolar portion of the chain corresponds to 681–693 (AISQTGQDGGHPL). Residues 694-714 (FAYVAIAIFTTIMLTPLLPFI) form a helical membrane-spanning segment. At 715 to 721 (HRYTYHV) the chain is on the cytoplasmic side. Residues 722 to 742 (PLFLLAVFLGTLIYNLVAFPF) traverse the membrane as a helical segment. Residues 743–878 (SDSNRLKLYY…RRAFEIGNDD (136 aa)) lie on the Vacuolar side of the membrane.

The protein belongs to the peptidase M28 family. Requires Zn(2+) as cofactor.

It is found in the vacuole membrane. Functionally, may be involved in vacuolar sorting and osmoregulation. This Aspergillus flavus (strain ATCC 200026 / FGSC A1120 / IAM 13836 / NRRL 3357 / JCM 12722 / SRRC 167) protein is Vacuolar membrane protease.